The primary structure comprises 328 residues: 5,10-methylenetetrahydromethanopterin reductase (328 aa).

This sequence belongs to the mer family.

Its subcellular location is the cytoplasm. It catalyses the reaction 5-methyl-5,6,7,8-tetrahydromethanopterin + oxidized coenzyme F420-(gamma-L-Glu)(n) + H(+) = 5,10-methylenetetrahydromethanopterin + reduced coenzyme F420-(gamma-L-Glu)(n). It participates in one-carbon metabolism; methanogenesis from CO(2); methyl-coenzyme M from 5,10-methylene-5,6,7,8-tetrahydromethanopterin: step 1/2. Functionally, catalyzes the reversible reduction of methylene-H(4)MPT to methyl-H(4)MPT. The chain is 5,10-methylenetetrahydromethanopterin reductase from Methanosarcina acetivorans (strain ATCC 35395 / DSM 2834 / JCM 12185 / C2A).